The following is a 472-amino-acid chain: Poly(A) polymerase catalytic subunit (472 aa).

Catalysis depends on residues D194 and D196.

The protein belongs to the poxviridae poly(A) polymerase catalytic subunit family. As to quaternary structure, heterodimer of a large (catalytic) subunit and a small (regulatory) subunit.

The enzyme catalyses RNA(n) + ATP = RNA(n)-3'-adenine ribonucleotide + diphosphate. In terms of biological role, polymerase that creates the 3'-poly(A) tail of mRNA's. This Serinus (CNPV) protein is Poly(A) polymerase catalytic subunit (PAPL).